The primary structure comprises 146 residues: Large ribosomal subunit protein uL15 (146 aa).

Residues 1–57 form a disordered region; sequence MKLHELKPAQGSRKTRNRVGRGSSSGNGKTAGRGQKGQKARSGGNIRSGFEGGQTPL. Residues 23–35 show a composition bias toward gly residues; sequence SSSGNGKTAGRGQ.

The protein belongs to the universal ribosomal protein uL15 family. Part of the 50S ribosomal subunit.

Its function is as follows. Binds to the 23S rRNA. This chain is Large ribosomal subunit protein uL15, found in Streptococcus mutans serotype c (strain ATCC 700610 / UA159).